Reading from the N-terminus, the 264-residue chain is Somatomedin-B and thrombospondin type-1 domain-containing protein (264 aa).

The signal sequence occupies residues 1-20 (MRTLWMALCALSRLWPGAQA). Residues 24-75 (EAGRCCPGRDPACFARGWRLDRVYGTCFCDQACRFTGDCCFDYDRACPARPC) form the SMB domain. Disulfide bonds link C28-C36, C28-C52, C36-C70, C50-C52, C50-C63, C56-C62, and C63-C70. The TSP type-1 domain maps to 74–127 (PCFVGEWSPWSGCADQCKPTTRVRRRSVQQEPQNGGAPCPPLEERAGCLEYSTP). N227 carries an N-linked (GlcNAc...) asparagine glycan.

It belongs to the thrombospondin family. As to expression, detected in aorta extracellular matrix (at protein level).

The protein resides in the secreted. The protein localises to the extracellular space. It is found in the extracellular matrix. The chain is Somatomedin-B and thrombospondin type-1 domain-containing protein (SBSPON) from Homo sapiens (Human).